A 336-amino-acid chain; its full sequence is Pyridoxal 5'-phosphate synthase subunit PdxS (336 aa).

Aspartate 62 contributes to the D-ribose 5-phosphate binding site. Lysine 119 serves as the catalytic Schiff-base intermediate with D-ribose 5-phosphate. Glycine 191 is a binding site for D-ribose 5-phosphate. Position 203 (lysine 203) interacts with D-glyceraldehyde 3-phosphate. Residues glycine 254 and 275–276 (GS) each bind D-ribose 5-phosphate.

This sequence belongs to the PdxS/SNZ family. In terms of assembly, in the presence of PdxT, forms a dodecamer of heterodimers.

It catalyses the reaction aldehydo-D-ribose 5-phosphate + D-glyceraldehyde 3-phosphate + L-glutamine = pyridoxal 5'-phosphate + L-glutamate + phosphate + 3 H2O + H(+). The protein operates within cofactor biosynthesis; pyridoxal 5'-phosphate biosynthesis. Functionally, catalyzes the formation of pyridoxal 5'-phosphate from ribose 5-phosphate (RBP), glyceraldehyde 3-phosphate (G3P) and ammonia. The ammonia is provided by the PdxT subunit. Can also use ribulose 5-phosphate and dihydroxyacetone phosphate as substrates, resulting from enzyme-catalyzed isomerization of RBP and G3P, respectively. The sequence is that of Pyridoxal 5'-phosphate synthase subunit PdxS from Pyrobaculum calidifontis (strain DSM 21063 / JCM 11548 / VA1).